The primary structure comprises 575 residues: E3 ubiquitin-protein ligase IpaH1.4 (575 aa).

The interval 1–270 (MIKSTNIQAI…PDYSGPQIFF (270 aa)) is interaction with target proteins. 8 LRR repeats span residues 69–90 (LQNQEAELNLSELDLKTLPDLP), 91–115 (PQITTLEIRKNLLTHLPDLPPMLKV), 117–130 (HAQFNQLESLPALP), 131–150 (ETLEELNAGDNKIKELPFLP), 151–170 (ENLTHLRVHNNRLHILPLLP), 171–195 (PELKLLVVSGNRLDSIPPFPDKLEG), 197–209 (ALANNFIEQLPEL), and 210–233 (PFSMNRAVLMNNNLTTLPESVLRL). Residues 271-281 (SMGNSATISAP) form a linker region. Positions 282–575 (EHSLADAVTA…LSENGSNHIA (294 aa)) are E3 ubiquitin-protein ligase catalytic domain. Residues 284 to 575 (SLADAVTAWF…LSENGSNHIA (292 aa)) form the NEL domain. The active-site Glycyl thioester intermediate is the Cys-368.

Belongs to the LRR-containing bacterial E3 ligase family. As to quaternary structure, interacts with human RBCK1/HOIL-1 and RNF31/HOIP components of the LUBAC complex. Post-translationally, ubiquitinated in the presence of host E1 ubiquitin-activating enzyme, E2 ubiquitin-conjugating enzyme and ubiquitin.

It is found in the secreted. It localises to the host cytoplasm. It catalyses the reaction S-ubiquitinyl-[E2 ubiquitin-conjugating enzyme]-L-cysteine + [acceptor protein]-L-lysine = [E2 ubiquitin-conjugating enzyme]-L-cysteine + N(6)-ubiquitinyl-[acceptor protein]-L-lysine.. It participates in protein modification; protein ubiquitination. Its activity is regulated as follows. Exists in an autoinhibited state in the absence of substrate protein, probably due to interactions of the leucine-rich repeat domain with the catalytic domain. Is activated upon binding to a substrate protein. E3 ubiquitin-protein ligase effector that inhibits host cell innate immunity during bacterial infection by catalyzing 'Lys-48'-linked polyubiquitination and subsequent degradation of host RNF31/HOIP and RBCK1/HOIL-1. Host RNF31/HOIP is the catalytic component of the LUBAC complex, which conjugates linear ('Met-1'-linked) polyubiquitin chains at the surface of bacteria invading the host cytosol to form the ubiquitin coat surrounding bacteria. The bacterial ubiquitin coat acts as an 'eat-me' signal for xenophagy and promotes NF-kappa-B activation. By promoting degradation of host RNF31/HOIP, IpaH1.4 prevents formation of the bacterial ubiquitin coat and activation of host cell innate immunity. The polypeptide is E3 ubiquitin-protein ligase IpaH1.4 (Shigella flexneri).